The chain runs to 206 residues: Probable N-acetyltransferase 14 (206 aa).

The region spanning 9 to 206 (LSVREMREEE…TIVQEFRKDI (198 aa)) is the N-acetyltransferase domain. The next 2 helical transmembrane spans lie at 37–57 (LILY…ASSG) and 60–80 (FILN…IVGL).

This sequence belongs to the camello family.

Its subcellular location is the membrane. Its function is as follows. Probable acetyltransferase. This chain is Probable N-acetyltransferase 14 (nat14), found in Xenopus tropicalis (Western clawed frog).